The following is a 169-amino-acid chain: Peptide methionine sulfoxide reductase MsrA 1 (169 aa).

Cys-12 is a catalytic residue.

This sequence belongs to the MsrA Met sulfoxide reductase family.

It catalyses the reaction L-methionyl-[protein] + [thioredoxin]-disulfide + H2O = L-methionyl-(S)-S-oxide-[protein] + [thioredoxin]-dithiol. It carries out the reaction [thioredoxin]-disulfide + L-methionine + H2O = L-methionine (S)-S-oxide + [thioredoxin]-dithiol. Its function is as follows. Has an important function as a repair enzyme for proteins that have been inactivated by oxidation. Catalyzes the reversible oxidation-reduction of methionine sulfoxide in proteins to methionine. This Staphylococcus aureus (strain Mu50 / ATCC 700699) protein is Peptide methionine sulfoxide reductase MsrA 1 (msrA1).